The primary structure comprises 60 residues: MEKKFLDILVCPVTKGRLEYHQDKQELWSRQAKLAYPIKDGIPYMLENEARPLGEEELEA.

The protein belongs to the UPF0434 family.

This is UPF0434 protein NMC0623 from Neisseria meningitidis serogroup C / serotype 2a (strain ATCC 700532 / DSM 15464 / FAM18).